The primary structure comprises 474 residues: Magnesium transporter MRS2-A, chloroplastic (474 aa).

A chloroplast-targeting transit peptide spans 1–55; sequence MASVSSSPSYSSQAAVLLLLHQPPHQHGHGGACLRYRGSQSQGRGNAVATSLGLS. The interval 79 to 129 is disordered; that stretch reads GKDGRAVTKDEEEEAAAAAVEEEGEVEVRREEDKPGDDGSREAAARGSGSG. The segment covering 88-103 has biased composition (acidic residues); the sequence is DEEEEAAAAAVEEEGE. Basic and acidic residues predominate over residues 104 to 122; it reads VEVRREEDKPGDDGSREAA. A run of 2 helical transmembrane segments spans residues 412-432 and 444-464; these read LLLQVGTFCVAIGALIAGIFG and WAFWATTGGIVVGAVAGFFIM. The short motif at 432–434 is the Required for magnesium transport activity element; that stretch reads GMN.

It belongs to the CorA metal ion transporter (MIT) (TC 1.A.35.5) family.

The protein localises to the plastid. Its subcellular location is the chloroplast membrane. Functionally, magnesium transporter that may mediate the influx of magnesium in chloroplast. The protein is Magnesium transporter MRS2-A, chloroplastic (MRS2-A) of Oryza sativa subsp. japonica (Rice).